The primary structure comprises 314 residues: ATP synthase gamma chain (314 aa).

This sequence belongs to the ATPase gamma chain family. In terms of assembly, F-type ATPases have 2 components, CF(1) - the catalytic core - and CF(0) - the membrane proton channel. CF(1) has five subunits: alpha(3), beta(3), gamma(1), delta(1), epsilon(1). CF(0) has three main subunits: a, b and c.

It localises to the cell membrane. Its function is as follows. Produces ATP from ADP in the presence of a proton gradient across the membrane. The gamma chain is believed to be important in regulating ATPase activity and the flow of protons through the CF(0) complex. The chain is ATP synthase gamma chain from Lactiplantibacillus plantarum (strain ATCC BAA-793 / NCIMB 8826 / WCFS1) (Lactobacillus plantarum).